We begin with the raw amino-acid sequence, 506 residues long: Cytochrome P450 71B8 (506 aa).

The helical transmembrane segment at 5–25 (ILLCFFFLFPLLLTLFKKLLP) threads the bilayer. Residue C443 participates in heme binding.

This sequence belongs to the cytochrome P450 family. Heme serves as cofactor.

It is found in the membrane. The chain is Cytochrome P450 71B8 (CYP71B8) from Arabidopsis thaliana (Mouse-ear cress).